The following is an 835-amino-acid chain: Involucrin (835 aa).

Over residues Met-1 to Leu-15 the composition is skewed to polar residues. Disordered regions lie at residues Met-1 to Arg-133, Glu-150 to Pro-206, Gly-221 to His-285, Gly-321 to Gln-342, Gly-381 to Glu-428, Leu-446 to Pro-486, Gly-501 to Glu-548, and Leu-566 to Leu-809. The segment covering Glu-76–His-91 has biased composition (low complexity). Basic and acidic residues-rich tracts occupy residues Trp-92–Arg-115 and Gln-159–Gln-168. Residues Gln-169–Gly-181 show a composition bias toward low complexity. Composition is skewed to basic and acidic residues over residues Gln-182–Gln-198 and Gln-222–Gln-268. Composition is skewed to low complexity over residues Gln-269–Gly-281, Gln-329–Gly-341, and Gln-389–Gly-401. Basic and acidic residues-rich tracts occupy residues Gln-402–Gly-421 and Leu-446–Glu-464. Over residues Gln-509–Gly-521 the composition is skewed to low complexity. Composition is skewed to basic and acidic residues over residues Gln-522 to Gly-541, Leu-566 to Glu-584, and Lys-594 to Glu-620. Over residues His-655 to Gly-668 the composition is skewed to low complexity. The segment covering Gln-669–Glu-685 has biased composition (basic and acidic residues). The segment covering Leu-693–Pro-710 has biased composition (low complexity). 3 stretches are compositionally biased toward basic and acidic residues: residues Lys-711–Glu-721, Gln-729–Ala-738, and Lys-751–Gln-775. Over residues Gln-776–Gln-789 the composition is skewed to polar residues.

Belongs to the involucrin family. As to quaternary structure, directly or indirectly cross-linked to cornifelin (CNFN). Post-translationally, substrate of transglutaminase. Specific glutamines or lysines are cross-linked to keratins, desmoplakin and to inter involucrin molecules. Keratinocytes of epidermis and other stratified squamous epithelia.

Its subcellular location is the cytoplasm. Its function is as follows. Part of the insoluble cornified cell envelope (CE) of stratified squamous epithelia. The chain is Involucrin (IVL) from Pongo pygmaeus (Bornean orangutan).